Reading from the N-terminus, the 301-residue chain is Probable alpha-L-glutamate ligase (301 aa).

Residues 104–287 enclose the ATP-grasp domain; that stretch reads LQLLSRKGIG…VAGLIYEFIE (184 aa). ATP contacts are provided by residues K141, 178–179, D187, and 211–213; these read EF and RSN. Mg(2+) is bound by residues D248, E260, and N262. Mn(2+) contacts are provided by D248, E260, and N262.

Belongs to the RimK family. It depends on Mg(2+) as a cofactor. Mn(2+) is required as a cofactor.

In Shewanella loihica (strain ATCC BAA-1088 / PV-4), this protein is Probable alpha-L-glutamate ligase.